Here is a 79-residue protein sequence, read N- to C-terminus: Conotoxin VnMEKL-024 (79 aa).

A signal peptide spans Met1–Ala19. Residues Leu20–Glu50 constitute a propeptide that is removed on maturation. 3 disulfide bridges follow: Cys51–Cys65, Cys58–Cys69, and Cys64–Cys76.

The protein belongs to the conotoxin O2 superfamily. Expressed by the venom duct.

It is found in the secreted. The polypeptide is Conotoxin VnMEKL-024 (Conus ventricosus (Mediterranean cone)).